A 237-amino-acid polypeptide reads, in one-letter code: Demethylmenaquinone methyltransferase (237 aa).

Residues Thr-58, Asp-79, and 106 to 107 (NA) contribute to the S-adenosyl-L-methionine site.

The protein belongs to the class I-like SAM-binding methyltransferase superfamily. MenG/UbiE family.

The catalysed reaction is a 2-demethylmenaquinol + S-adenosyl-L-methionine = a menaquinol + S-adenosyl-L-homocysteine + H(+). The protein operates within quinol/quinone metabolism; menaquinone biosynthesis; menaquinol from 1,4-dihydroxy-2-naphthoate: step 2/2. In terms of biological role, methyltransferase required for the conversion of demethylmenaquinol (DMKH2) to menaquinol (MKH2). This is Demethylmenaquinone methyltransferase from Bacillus cereus (strain B4264).